Reading from the N-terminus, the 382-residue chain is Mannitol-1-phosphate 5-dehydrogenase (382 aa).

3 to 14 contributes to the NAD(+) binding site; the sequence is ALHFGAGNIGRG.

Belongs to the mannitol dehydrogenase family.

The enzyme catalyses D-mannitol 1-phosphate + NAD(+) = beta-D-fructose 6-phosphate + NADH + H(+). This is Mannitol-1-phosphate 5-dehydrogenase from Erwinia tasmaniensis (strain DSM 17950 / CFBP 7177 / CIP 109463 / NCPPB 4357 / Et1/99).